Consider the following 233-residue polypeptide: DNA repair protein RecO (233 aa).

The protein belongs to the RecO family.

Involved in DNA repair and RecF pathway recombination. The sequence is that of DNA repair protein RecO from Pseudomonas aeruginosa (strain LESB58).